The primary structure comprises 376 residues: Homoserine dehydrogenase (376 aa).

N17 and I18 together coordinate NADP(+). NAD(+) is bound at residue I18. 4 residues coordinate NADPH: I18, K67, T99, and K123. NADP(+) contacts are provided by T99 and K123. T99 serves as a coordination point for NAD(+). The Na(+) site is built by E150, V153, A155, and L157. S201 bears the Phosphoserine mark. The NADP(+) site is built by G213 and E216. The L-homoserine site is built by E216 and D227. The Proton donor role is filled by K231. Residue G349 coordinates NADP(+). G349 is a binding site for NAD(+). G349 lines the NADPH pocket.

The protein belongs to the homoserine dehydrogenase family. Requires a metal cation as cofactor.

The enzyme catalyses L-homoserine + NADP(+) = L-aspartate 4-semialdehyde + NADPH + H(+). It catalyses the reaction L-homoserine + NAD(+) = L-aspartate 4-semialdehyde + NADH + H(+). Its pathway is amino-acid biosynthesis; L-methionine biosynthesis via de novo pathway; L-homoserine from L-aspartate: step 3/3. It functions in the pathway amino-acid biosynthesis; L-threonine biosynthesis; L-threonine from L-aspartate: step 3/5. Its function is as follows. Catalyzes the conversion of L-aspartate-beta-semialdehyde (L-Asa) to L-homoserine (L-Hse), the third step in the biosynthesis of amino acids that derive from aspartate (the aspartate family of amino acids), including methioinine and threonine, the latter of which is a precursor to isoleucine; production of homoserine leads to a branch-point in the pathway as it can either be O-phosphorylated for processing to threonine, or O-acylated for processing to methionine. This Schizosaccharomyces pombe (strain 972 / ATCC 24843) (Fission yeast) protein is Homoserine dehydrogenase.